Here is a 291-residue protein sequence, read N- to C-terminus: Secreted effector protein PipB (291 aa).

2 Pentapeptide repeat domains span residues 154–193 (LNLRGVNLAHKDFQGEDLSKIDASNADFRETTLSNVNLVG) and 199–238 (ANLHAVNLMGSNMTKANLTHADLTCANMSGVNLTAAILFG).

Its subcellular location is the secreted. It is found in the host membrane. Functionally, effector proteins function to alter host cell physiology and promote bacterial survival in host tissues. Does not appear to be required for the formation or the maintenance of either Salmonella-containing vacuole (SCV) or the Salmonella-induced filaments (Sifs). Not required for intracellular replication in phagocytic cells. This chain is Secreted effector protein PipB (pipB), found in Salmonella typhimurium (strain LT2 / SGSC1412 / ATCC 700720).